A 136-amino-acid polypeptide reads, in one-letter code: Protein LpdD (136 aa).

The protein belongs to the CinA family.

Functionally, probably involved in tannin degradation, however the precise biochemical function in metabolism of gallate is unknown. In Lactiplantibacillus plantarum (strain ATCC BAA-793 / NCIMB 8826 / WCFS1) (Lactobacillus plantarum), this protein is Protein LpdD.